Reading from the N-terminus, the 378-residue chain is Ribosomal RNA large subunit methyltransferase G (378 aa).

This sequence belongs to the methyltransferase superfamily. RlmG family.

It is found in the cytoplasm. The catalysed reaction is guanosine(1835) in 23S rRNA + S-adenosyl-L-methionine = N(2)-methylguanosine(1835) in 23S rRNA + S-adenosyl-L-homocysteine + H(+). Functionally, specifically methylates the guanine in position 1835 (m2G1835) of 23S rRNA. The polypeptide is Ribosomal RNA large subunit methyltransferase G (Escherichia coli O9:H4 (strain HS)).